We begin with the raw amino-acid sequence, 332 residues long: Tumor necrosis factor receptor superfamily member 6 (332 aa).

A signal peptide spans 1-16; sequence MSGIWVLLSLVFTCIA. Residues 17–175 are Extracellular-facing; the sequence is GPLSKGDDAQ…VFQSAGSRSN (159 aa). An N-linked (GlcNAc...) asparagine glycan is attached at N38. TNFR-Cys repeat units lie at residues 45–81, 82–125, and 126–164; these read ECPEGQHREGQFCCQPCPPGKRKHADCTSPGGAPQCV, PCSE…NTKC, and RCKPNFFCHTSQCEHCNPCTTCEHGVIENCTPTSNTKCR. 9 cysteine pairs are disulfide-bonded: C46/C57, C58/C71, C61/C80, C83/C99, C102/C117, C105/C125, C127/C141, C144/C155, and C147/C163. N-linked (GlcNAc...) asparagine glycosylation is present at N116. Residues 176 to 192 form a helical membrane-spanning segment; sequence LHWLWALLILIPVPALV. Topologically, residues 193–332 are cytoplasmic; that stretch reads YREVKRRCRR…NSQNENESLT (140 aa). C200 carries S-palmitoyl cysteine lipidation. The tract at residues 210 to 314 is interaction with HIPK3; sequence PITSNAEEVP…DKINDIVQKD (105 aa). T212 is subject to Phosphothreonine. Positions 227–251 are interaction with CALM; the sequence is GKYITRIAEQMKITEVKDFVRKNGI. The region spanning 227–311 is the Death domain; sequence GKYITRIAEQ…ALADKINDIV (85 aa).

As to quaternary structure, component of the death-induced signaling complex (DISC) composed of cell surface receptor FAS/CD95, adapter protein FADD and the CASP8 protease; recruitment of CASP8 to the complex is required for processing of CASP8 into the p18 and p10 subunits. Interacts directly (via DED domain) with NOL3 (via CARD domain); inhibits death-inducing signaling complex (DISC) assembly by inhibiting the increase in FAS-FADD binding induced by FAS activation. Binds DAXX. Interacts with HIPK3. Part of a complex containing HIPK3 and FADD. Binds RIPK1 and FAIM2. Interacts with BABAM2 and FEM1B. Interacts with CALM. In the absence of stimulation, interacts with BIRC2, DDX3X and GSK3B. The interaction with BIRC2 and DDX3X is further enhanced upon receptor stimulation and accompanied by DDX3X and BIRC2 cleavage. Post-translationally, palmitoylated. Palmitoylation by ZDHHC7 prevents the lysosomal degradation of FAS regulating its expression at the plasma membrane.

The protein resides in the cell membrane. The protein localises to the membrane raft. Functionally, receptor for TNFSF6/FASLG. The adapter molecule FADD recruits caspase CASP8 to the activated receptor. The resulting death-inducing signaling complex (DISC) performs CASP8 proteolytic activation which initiates the subsequent cascade of caspases (aspartate-specific cysteine proteases) mediating apoptosis. FAS-mediated apoptosis may have a role in the induction of peripheral tolerance, in the antigen-stimulated suicide of mature T-cells, or both. The sequence is that of Tumor necrosis factor receptor superfamily member 6 (FAS) from Sus scrofa (Pig).